Reading from the N-terminus, the 270-residue chain is MASFKLMSSSNSDLSRRNSSSASSSPSIRSSHHLRPNPHADHSRISFAYGGGVNDYTFASDSKPFEMAIDVDRSIGDRNSVNNGKSVDDVWKEIVSGEQKTIMMKEEEPEDIMTLEDFLAKAEMDEGASDEIDVKIPTERLNNDGSYTFDFPMQRHSSFQMVEGSMGGGVTRGKRGRVMMEAMDKAAAQRQKRMIKNRESAARSRERKQAYQVELETLAAKLEEENEQLLKEIEESTKERYKKLMEVLIPVDEKPRPPSRPLSRSHSLEW.

The tract at residues 1-46 (MASFKLMSSSNSDLSRRNSSSASSSPSIRSSHHLRPNPHADHSRIS) is disordered. Residues 8–29 (SSSNSDLSRRNSSSASSSPSIR) show a composition bias toward low complexity. A Phosphoserine modification is found at Ser-27. The bZIP domain occupies 187-250 (AAQRQKRMIK…YKKLMEVLIP (64 aa)). The segment at 190–208 (RQKRMIKNRESAARSRERK) is basic motif. Positions 215 to 229 (LETLAAKLEEENEQL) are leucine-zipper. Residues 250-270 (PVDEKPRPPSRPLSRSHSLEW) are disordered. The span at 261 to 270 (PLSRSHSLEW) shows a compositional bias: low complexity.

Belongs to the bZIP family. DNA-binding heterodimer with GBF2 and GBF3; non DNA-binding homodimer.

It localises to the nucleus. Its function is as follows. Binds to the G-box motif (5'-CCACGTGG-3') of the rbcS-1A gene promoter. G-box and G-box-like motifs are cis-acting elements defined in promoters of certain plant genes which are regulated by such diverse stimuli as light-induction or hormone control. The sequence is that of G-box-binding factor 4 (GBF4) from Arabidopsis thaliana (Mouse-ear cress).